A 580-amino-acid chain; its full sequence is MNFAVLPPEVNSARIFAGAGLGPMLAAASAWDGLAEELHAAAGSFASVTTGLTGDAWHGPASLAMTRAASPYVGWLNTAAGQAAQAAGQARLAASAFEATLAATVSPAMVAANRTRLASLVAANLLGQNAPAIAAAEAEYEQIWAQDVAAMFGYHSAASAVATQLAPIQEGLQQQLQNVLAQLASGNLGSGNVGVGNIGNDNIGNANIGFGNRGDANIGIGNIGDRNLGIGNTGNWNIGIGITGNGQIGFGKPANPDVLVVGNGGPGVTALVMGGTDSLLPLPNIPLLEYAARFITPVHPGYTATFLETPSQFFPFTGLNSLTYDVSVAQGVTNLHTAIMAQLAAGNEVVVFGTSQSATIATFEMRYLQSLPAHLRPGLDELSFTLTGNPNRPDGGILTRFGFSIPQLGFTLSGATPADAYPTVDYAFQYDGVNDFPKYPLNVFATANAIAGILFLHSGLIALPPDLASGVVQPVSSPDVLTTYILLPSQDLPLLVPLRAIPLLGNPLADLIQPDLRVLVELGYDRTAHQDVPSPFGLFPDVDWAEVAADLQQGAVQGVNDALSGLGLPPPWQPALPRLF.

The PE-PPE domain maps to 300–525 (PGYTATFLET…LRVLVELGYD (226 aa)).

It belongs to the mycobacterial PPE family.

This is an uncharacterized protein from Mycobacterium tuberculosis (strain CDC 1551 / Oshkosh).